We begin with the raw amino-acid sequence, 273 residues long: Large ribosomal subunit protein uL2 (273 aa).

Residues 221–273 form a disordered region; the sequence is RGTAMNPVDHPHGGGEGRNFGKHPVTPWGVQTKGKKTRHNKRTDKFIVRRRGK. The span at 253-273 shows a compositional bias: basic residues; the sequence is KGKKTRHNKRTDKFIVRRRGK.

The protein belongs to the universal ribosomal protein uL2 family. As to quaternary structure, part of the 50S ribosomal subunit. Forms a bridge to the 30S subunit in the 70S ribosome.

In terms of biological role, one of the primary rRNA binding proteins. Required for association of the 30S and 50S subunits to form the 70S ribosome, for tRNA binding and peptide bond formation. It has been suggested to have peptidyltransferase activity; this is somewhat controversial. Makes several contacts with the 16S rRNA in the 70S ribosome. This is Large ribosomal subunit protein uL2 from Glaesserella parasuis serovar 5 (strain SH0165) (Haemophilus parasuis).